We begin with the raw amino-acid sequence, 274 residues long: uncharacterized protein (274 aa).

The protein belongs to the type II cytokine receptor family.

This is an uncharacterized protein from Sus scrofa (Pig).